A 483-amino-acid chain; its full sequence is Altronate oxidoreductase (483 aa).

Residue 18-29 (IIQFGEGNFLRA) participates in NAD(+) binding.

The protein belongs to the mannitol dehydrogenase family. UxaB subfamily.

The catalysed reaction is D-altronate + NAD(+) = keto-D-tagaturonate + NADH + H(+). It functions in the pathway carbohydrate metabolism; pentose and glucuronate interconversion. In Escherichia coli O7:K1 (strain IAI39 / ExPEC), this protein is Altronate oxidoreductase.